We begin with the raw amino-acid sequence, 364 residues long: Uroporphyrinogen decarboxylase (364 aa).

Substrate contacts are provided by residues 28–32 (RQAGR), phenylalanine 47, aspartate 78, tyrosine 158, threonine 213, and histidine 334.

It belongs to the uroporphyrinogen decarboxylase family. Homodimer.

The protein localises to the cytoplasm. The catalysed reaction is uroporphyrinogen III + 4 H(+) = coproporphyrinogen III + 4 CO2. Its pathway is porphyrin-containing compound metabolism; protoporphyrin-IX biosynthesis; coproporphyrinogen-III from 5-aminolevulinate: step 4/4. Catalyzes the decarboxylation of four acetate groups of uroporphyrinogen-III to yield coproporphyrinogen-III. The chain is Uroporphyrinogen decarboxylase from Ralstonia nicotianae (strain ATCC BAA-1114 / GMI1000) (Ralstonia solanacearum).